A 261-amino-acid polypeptide reads, in one-letter code: Ribonuclease HII (261 aa).

One can recognise an RNase H type-2 domain in the interval 72 to 260; that stretch reads AVICGIDEVG…IKSIVLEKLD (189 aa). Residues D78, E79, and D170 each contribute to the a divalent metal cation site.

Belongs to the RNase HII family. It depends on Mn(2+) as a cofactor. Mg(2+) is required as a cofactor.

The protein resides in the cytoplasm. The enzyme catalyses Endonucleolytic cleavage to 5'-phosphomonoester.. Functionally, endonuclease that specifically degrades the RNA of RNA-DNA hybrids. The chain is Ribonuclease HII from Staphylococcus carnosus (strain TM300).